A 382-amino-acid polypeptide reads, in one-letter code: ATP phosphoribosyltransferase regulatory subunit (382 aa).

The protein belongs to the class-II aminoacyl-tRNA synthetase family. HisZ subfamily. Heteromultimer composed of HisG and HisZ subunits.

The protein resides in the cytoplasm. It functions in the pathway amino-acid biosynthesis; L-histidine biosynthesis; L-histidine from 5-phospho-alpha-D-ribose 1-diphosphate: step 1/9. Its function is as follows. Required for the first step of histidine biosynthesis. May allow the feedback regulation of ATP phosphoribosyltransferase activity by histidine. The chain is ATP phosphoribosyltransferase regulatory subunit from Burkholderia cenocepacia (strain ATCC BAA-245 / DSM 16553 / LMG 16656 / NCTC 13227 / J2315 / CF5610) (Burkholderia cepacia (strain J2315)).